Reading from the N-terminus, the 205-residue chain is Inactive ribonuclease-like protein 9 (205 aa).

The N-terminal stretch at 1 to 26 (MMRTLITTHPLPLLLLPQQLLQLVQF) is a signal peptide. 2 disulfide bridges follow: Cys-116–Cys-168 and Cys-123–Cys-130. 2 N-linked (GlcNAc...) asparagine glycosylation sites follow: Asn-131 and Asn-143.

The protein belongs to the pancreatic ribonuclease family. At the mRNA level, widely expressed. At protein level, restricted to epididymis. Expressed in spermatozoa (sperm head and neck), with higher levels on ejaculated and epididymal sperm than on testicular sperm (at protein level). Expressed in the epithelial cells of the epididymal tubule (at protein level). Not detected in muscle.

The protein localises to the secreted. Its function is as follows. Does not exhibit any ribonuclease activity. The protein is Inactive ribonuclease-like protein 9 (RNASE9) of Homo sapiens (Human).